A 736-amino-acid polypeptide reads, in one-letter code: MRCRSAAMWIFLALRTALGSVEVRWCTASEPEQQKCEDMSQAFREAGLQPALLCVQGTSADHCVQLIAAHEADAITLDGGAIYEAGKEHGLKPVVGEVYDQEVGTSYYAVAVVKRSSNVTINTLRGVKSCHTGINRTVGWNVPVGYLVDSGRLSVMGCDVLKAVSEYFGGSCVPGAGETRYSESLCRLCRGDTSGEGVCDKSPLERYYDYSGAFRCLAEGAGDVAFVKHSTVLENTDGRTLPSWGHMLMSRDFELLCRDGSRASVTEWQHCHLARVPAHAVVVRADTDAGLIFRLLNEGQRLFSHEGSSFQMFSSEAYGQKNLLFKDSTLELVPIATQTYEAWLGPEYLHAMKGLLCDPNRLPPYLRWCVLSTPEIQKCGDMAVAFSRQRLKPEIQCVSAESPQHCMEQIQAGHIDAVTLNGEDIHTAGKTYGLIPAAGELYAADDRSNSYFVVAVVKRDSAYAFTVDELRGKRSCHPGFGSPAGWDVPVGALIHWGYIRPRNCDVLTAVGQFFNASCVPVNNPKKYPSSLCALCVGDEQGRNKCTGNSQERYYGDSGAFRCLVEGAGDVAFVKHTTIFDNTNGHNPEPWAAHLRSQDYELLCPNGARAEAHQFAACNLAQIPSHAVMVRPDTNIFTVYGLLDKAQDLFGDDHNKNGFKMFDSSSYHGRDLLFKDATVRAVPVGERTTYQDWLGPDYVAALEGMQSQRCSGAAVGAPGASLLPLLPLAVGLLLSSL.

The signal sequence occupies residues 1–19 (MRCRSAAMWIFLALRTALG). 2 Transferrin-like domains span residues 23–357 (VRWC…GLLC) and 366–706 (LRWC…GMQS). Disulfide bonds link C26/C63 and C36/C54. Fe(3+) is bound by residues D78 and Y107. The N-linked (GlcNAc...) asparagine glycan is linked to N118. 4 cysteine pairs are disulfide-bonded: C130-C216, C172-C189, C186-C199, and C257-C271. Residue T132 participates in hydrogencarbonate binding. N135 carries N-linked (GlcNAc...) asparagine glycosylation. Positions 136, 138, and 139 each coordinate hydrogencarbonate. Y210 contributes to the Fe(3+) binding site. Positions 279 and 451 each coordinate Fe(3+). Residue N515 is glycosylated (N-linked (GlcNAc...) asparagine). H625 is a binding site for Fe(3+). Residue G711 is the site of GPI-anchor amidated glycine attachment. A propeptide spans 712-736 (AAVGAPGASLLPLLPLAVGLLLSSL) (removed in mature form).

It belongs to the transferrin family.

The protein localises to the cell membrane. In terms of biological role, involved in iron cellular uptake. Seems to be internalized and then recycled back to the cell membrane. Binds a single atom of iron per subunit. Could also bind zinc. This is Melanotransferrin from Oryctolagus cuniculus (Rabbit).